A 201-amino-acid polypeptide reads, in one-letter code: Large ribosomal subunit protein uL4 (201 aa).

Residues 44–68 (RAQKSRAEVSGSGRKPWRQKGTGRA) are disordered.

The protein belongs to the universal ribosomal protein uL4 family. As to quaternary structure, part of the 50S ribosomal subunit.

Its function is as follows. One of the primary rRNA binding proteins, this protein initially binds near the 5'-end of the 23S rRNA. It is important during the early stages of 50S assembly. It makes multiple contacts with different domains of the 23S rRNA in the assembled 50S subunit and ribosome. Forms part of the polypeptide exit tunnel. The chain is Large ribosomal subunit protein uL4 from Buchnera aphidicola subsp. Acyrthosiphon pisum (strain 5A).